Consider the following 63-residue polypeptide: Small ribosomal subunit protein eS31 (63 aa).

Residues cysteine 31, cysteine 34, cysteine 50, and cysteine 53 each contribute to the Zn(2+) site.

The protein belongs to the eukaryotic ribosomal protein eS31 family. In terms of assembly, part of the 30S ribosomal subunit. Zn(2+) serves as cofactor.

The sequence is that of Small ribosomal subunit protein eS31 (rps27ae) from Aeropyrum pernix (strain ATCC 700893 / DSM 11879 / JCM 9820 / NBRC 100138 / K1).